The sequence spans 325 residues: Probable cell division protein WhiA (325 aa).

A DNA-binding region (H-T-H motif) is located at residues 273-306; that stretch reads SLEELGRLADPPMTKDAVAGRIRRLLSMADRKAK.

It belongs to the WhiA family.

In terms of biological role, involved in cell division and chromosome segregation. The polypeptide is Probable cell division protein WhiA (Mycobacterium bovis (strain BCG / Tokyo 172 / ATCC 35737 / TMC 1019)).